A 90-amino-acid chain; its full sequence is MEASSRVTVQVLLLALVVQVTLSQHWSYGWLPGGKRSVGELEATIRMMGTGGVVSLPEEASAQTQERLRPYNVIKDDSSHFDRKKRFPNK.

Residues Met1–Ser23 form the signal peptide. Gln24 carries the post-translational modification Pyrrolidone carboxylic acid. Residue Gly33 is modified to Glycine amide.

The protein belongs to the GnRH family.

It is found in the secreted. In terms of biological role, stimulates the secretion of gonadotropins. The sequence is that of Progonadoliberin-3 (gnrh3) from Pagrus major (Red sea bream).